The following is a 424-amino-acid chain: Serine--tRNA ligase (424 aa).

229–231 (TAE) is an L-serine binding site. Residues 260–262 (RTE) and Val276 contribute to the ATP site. Glu283 serves as a coordination point for L-serine. ATP is bound at residue 347 to 350 (EVTS). Position 382 (Thr382) interacts with L-serine.

The protein belongs to the class-II aminoacyl-tRNA synthetase family. Type-1 seryl-tRNA synthetase subfamily. Homodimer. The tRNA molecule binds across the dimer.

The protein localises to the cytoplasm. The enzyme catalyses tRNA(Ser) + L-serine + ATP = L-seryl-tRNA(Ser) + AMP + diphosphate + H(+). It catalyses the reaction tRNA(Sec) + L-serine + ATP = L-seryl-tRNA(Sec) + AMP + diphosphate + H(+). The protein operates within aminoacyl-tRNA biosynthesis; selenocysteinyl-tRNA(Sec) biosynthesis; L-seryl-tRNA(Sec) from L-serine and tRNA(Sec): step 1/1. Functionally, catalyzes the attachment of serine to tRNA(Ser). Is also able to aminoacylate tRNA(Sec) with serine, to form the misacylated tRNA L-seryl-tRNA(Sec), which will be further converted into selenocysteinyl-tRNA(Sec). The protein is Serine--tRNA ligase of Rubrobacter xylanophilus (strain DSM 9941 / JCM 11954 / NBRC 16129 / PRD-1).